Here is a 283-residue protein sequence, read N- to C-terminus: Ubiquinone biosynthesis protein COQ4, mitochondrial (283 aa).

The transit peptide at 1-25 (MAIAKSVRARAVGLRSLRVLCAQRS) directs the protein to the mitochondrion. Residues His166, Asp167, His170, and Glu182 each coordinate Zn(2+).

It belongs to the COQ4 family. As to quaternary structure, component of a multi-subunit COQ enzyme complex, composed of at least COQ3, COQ4, COQ5, COQ6, COQ7 and COQ9. Requires Zn(2+) as cofactor.

Its subcellular location is the mitochondrion inner membrane. It carries out the reaction a 4-hydroxy-3-methoxy-5-(all-trans-polyprenyl)benzoate + H(+) = a 2-methoxy-6-(all-trans-polyprenyl)phenol + CO2. The protein operates within cofactor biosynthesis; ubiquinone biosynthesis. Its function is as follows. Lyase that catalyzes the C1-decarboxylation of 4-hydroxy-3-methoxy-5-(all-trans-polyprenyl)benzoic acid into 2-methoxy-6-(all-trans-polyprenyl)phenol during ubiquinone biosynthesis. This chain is Ubiquinone biosynthesis protein COQ4, mitochondrial, found in Coccidioides immitis (strain RS) (Valley fever fungus).